The following is a 61-amino-acid chain: Insect toxin BsIT1 (61 aa).

An LCN-type CS-alpha/beta domain is found at 1–61 (DGYILMRNGC…KHLNYHKKTC (61 aa)). Intrachain disulfides connect Cys-10–Cys-61, Cys-14–Cys-35, Cys-21–Cys-42, and Cys-25–Cys-44.

The protein belongs to the long (4 C-C) scorpion toxin superfamily. Sodium channel inhibitor family. Beta subfamily. Expressed by the venom gland.

The protein resides in the secreted. In terms of biological role, depressant insect beta-toxins cause a transient contraction paralysis followed by a slow flaccid paralysis. They bind voltage-independently at site-4 of sodium channels (Nav) and shift the voltage of activation toward more negative potentials thereby affecting sodium channel activation and promoting spontaneous and repetitive firing. This toxin is active only on insects and causes a transient contraction paralysis followed by a slow flaccid paralysis. The protein is Insect toxin BsIT1 of Hottentotta tamulus sindicus (Scorpion).